A 235-amino-acid polypeptide reads, in one-letter code: Probable transcriptional regulatory protein CFF8240_0424 (235 aa).

It belongs to the TACO1 family.

The protein localises to the cytoplasm. This is Probable transcriptional regulatory protein CFF8240_0424 from Campylobacter fetus subsp. fetus (strain 82-40).